Consider the following 417-residue polypeptide: Pre-mRNA-splicing factor PRP46 (417 aa).

WD repeat units follow at residues 119–159, 162–201, 209–248, 251–290, 293–334, 337–376, and 385–417; these read AHQG…LKAT, GHIM…SSSG, GHVG…EIMV, GHRS…TQLA, HHSK…NEFG, GENK…LLQS, and STES…WGEE.

It belongs to the WD repeat PRL1/PRL2 family. Associated with the spliceosome.

It is found in the cytoplasm. Its subcellular location is the nucleus. Its function is as follows. Involved in pre-mRNA splicing and required for cell cycle progression at G2/M. The sequence is that of Pre-mRNA-splicing factor PRP46 (PRP46) from Debaryomyces hansenii (strain ATCC 36239 / CBS 767 / BCRC 21394 / JCM 1990 / NBRC 0083 / IGC 2968) (Yeast).